Here is a 219-residue protein sequence, read N- to C-terminus: Orotate phosphoribosyltransferase (219 aa).

Lysine 26 provides a ligand contact to 5-phospho-alpha-D-ribose 1-diphosphate. 34-35 (FF) serves as a coordination point for orotate. 5-phospho-alpha-D-ribose 1-diphosphate is bound by residues 72–73 (YK), arginine 98, lysine 99, lysine 102, histidine 104, and 124–132 (DDVITAGTA). Orotate contacts are provided by threonine 128 and arginine 156.

The protein belongs to the purine/pyrimidine phosphoribosyltransferase family. PyrE subfamily. As to quaternary structure, homodimer. The cofactor is Mg(2+).

The catalysed reaction is orotidine 5'-phosphate + diphosphate = orotate + 5-phospho-alpha-D-ribose 1-diphosphate. It participates in pyrimidine metabolism; UMP biosynthesis via de novo pathway; UMP from orotate: step 1/2. In terms of biological role, catalyzes the transfer of a ribosyl phosphate group from 5-phosphoribose 1-diphosphate to orotate, leading to the formation of orotidine monophosphate (OMP). This Xanthomonas axonopodis pv. citri (strain 306) protein is Orotate phosphoribosyltransferase.